The chain runs to 297 residues: Band 7 protein AAEL010189 (297 aa).

Residues 1 to 13 (MGVVESITNSTKP) show a composition bias toward polar residues. Positions 1-30 (MGVVESITNSTKPGVTKKSSPEAEDDSNGE) are disordered. The helical transmembrane segment at 37–57 (ILIFLSWVLVVLTMPFSLLVC) threads the bilayer.

The protein belongs to the band 7/mec-2 family.

It localises to the membrane. This is Band 7 protein AAEL010189 from Aedes aegypti (Yellowfever mosquito).